The primary structure comprises 962 residues: Spliceosome associated factor 3, U4/U6 recycling protein (962 aa).

Positions 1 to 21 (MATTAASSASEPEVEPQAGPE) are enriched in low complexity. The interval 1–92 (MATTAASSAS…EDEWEYDEEE (92 aa)) is disordered. A2 is subject to N-acetylalanine. The tract at residues 2-352 (ATTAASSASE…LVPDLWIRYS (351 aa)) is mediates interaction with PRPF3. S10 carries the post-translational modification Phosphoserine. The span at 81 to 92 (AGEDEWEYDEEE) shows a compositional bias: acidic residues. 9 HAT repeats span residues 127–159 (GELSRVRAARQKMSELFPLTEELWLEWLHDEIS), 165–196 (LDREHVYELFERAVKDYICPNIWLEYGQYSVG), 202–238 (GGLEKVRSVFERALSSVGLHMTKGLAIWEAYREFESA), 243–276 (ARLEKVHSLFRRQLAIPLYEMEATFAEYEEWSEE), 325–357 (GDPARIQLIFERALVENCLVPDLWIRYSQYLDR), 360–392 (KVKDLVLSVHSRAVRNCPWTVALWSRYLLAMER), 395–431 (LDHQTISATFENALSAGFIQATDYVEIWQVYLDYLRR), 441–474 (KELEELRSMFTRALEYLQQEVEERFSESGDPSCL), and 488–521 (NNMQKARELWDSIMTRGNAKYANMWLEYYNLERA). A Phosphoserine modification is found at S216. Residues 488–521 (NNMQKARELWDSIMTRGNAKYANMWLEYYNLERA) form a required for interaction with USP4 region. The interval 538–952 (CTSDYPEHVC…VATEAPKMSN (415 aa)) is necessary and sufficient for U6 snRNA binding. The stretch at 559-618 (TLEDWDLAIQKTETRLARVNEQRMKAAEKEAALVQQEEEKAEQRKKVRAEKKALKKKKKT) forms a coiled coil. Positions 591–602 (LVQQEEEKAEQR) are enriched in basic and acidic residues. Residues 591–696 (LVQQEEEKAE…SLKRDMPKVA (106 aa)) are disordered. Residues 601-670 (QRKKVRAEKK…KEETELSGKC (70 aa)) form a required for nuclear localization region. The short motif at 602–609 (RKKVRAEK) is the Nuclear localization signal element. Basic residues predominate over residues 603–618 (KKVRAEKKALKKKKKT). Positions 627 to 640 (DEDEENEWGEEEEE) are enriched in acidic residues. S651 carries the phosphoserine modification. Positions 680–696 (KQKEKAASLKRDMPKVA) are enriched in basic and acidic residues. The RRM 1 domain occupies 704 to 782 (VTVFVSNLPY…RPMFVSPCVD (79 aa)). 2 positions are modified to phosphoserine: S795 and S852. In terms of domain architecture, RRM 2 spans 801–878 (HKLFISGLPF…NVIKVAISNP (78 aa)). Residues 880–962 (QRKVPEKPEV…ADFAKLLLRK (83 aa)) form a disordered region. R906 carries the post-translational modification Omega-N-methylarginine.

In terms of assembly, component of the 7SK snRNP complex at least composed of P-TEFb (composed of CDK9 and CCNT1/cyclin-T1), HEXIM1, HEXIM2, BCDIN3, SART3 proteins and 7SK and U6 snRNAs. Interacts with AGO1 and AGO2. Interacts with PRPF3 and USP4; the interaction with PRPF3 is direct and recruits USP4 to its substrate PRPF3. Interacts with USP15; the interaction is direct. Ubiquitously expressed, with low level of expression in liver, heart and skeletal. Also detected in hematopoietic cells (at protein level).

It is found in the nucleus. Its subcellular location is the nucleoplasm. The protein localises to the cajal body. It localises to the nucleus speckle. The protein resides in the cytoplasm. Its function is as follows. U6 snRNP-binding protein that functions as a recycling factor of the splicing machinery. Promotes the initial reassembly of U4 and U6 snRNPs following their ejection from the spliceosome during its maturation. Also binds U6atac snRNPs and may function as a recycling factor for U4atac/U6atac spliceosomal snRNP, an initial step in the assembly of U12-type spliceosomal complex. The U12-type spliceosomal complex plays a role in the splicing of introns with non-canonical splice sites. May also function as a substrate-targeting factor for deubiquitinases like USP4 and USP15. Recruits USP4 to ubiquitinated PRPF3 within the U4/U5/U6 tri-snRNP complex, promoting PRPF3 deubiquitination and thereby regulating the spliceosome U4/U5/U6 tri-snRNP spliceosomal complex disassembly. May also recruit the deubiquitinase USP15 to histone H2B and mediate histone deubiquitination, thereby regulating gene expression and/or DNA repair. May play a role in hematopoiesis probably through transcription regulation of specific genes including MYC. The polypeptide is Spliceosome associated factor 3, U4/U6 recycling protein (Mus musculus (Mouse)).